A 565-amino-acid chain; its full sequence is MVLKKGVKFFQRLINSKSLRFGENYEDDDLVNSDEVMKKPCPVQIVLAHEDDHNFELDEEALEQILLQEHIRDLNIVVVSVAGAFRKGKSFLLDFMLRYMYNKDSQSWIGGNNEPLTGFTWRGGCERETTGIQVWNEVFVIDRPNGTKVAVLLMDTQGAFDSQSTIKDCATVFALSTMTSSVQVYNLSQNIQEDDLQHLQLFTEYGRLAMEEIYQKPFQTLMFLIRDWSYPYEHSYGLEGGKQFLEKRLQVKKNQHEELQNVRKHIHNCFSNLGCFLLPHPGLKVATNPSFDGRLKDIDEDFKRELRNLVPLLLAPENLVEKEISGSKVTCRDLVEYFKAYIKIYQGEELPHPKSMLQATAEANNLAAVAGARDTYCKSMEQVCGGDKPYIAPSDLERKHLDLKEVAIKQFRSVKKMGGDEFCRRYQDQLEAEIEETYANFIKHNDGKNIFYAARTPATLFAVMFAMYIISGLTGFIGLNSIAVLCNLVMGLALTFLCTWAYVKYSGEFREIGTMIDQIAETLWEQVLKPLGDNLMEENIRQSVTNSIKAGLTDQVSHHARLKTD.

Topologically, residues 1–458 (MVLKKGVKFF…NIFYAARTPA (458 aa)) are cytoplasmic. Residues 73–318 (DLNIVVVSVA…LVPLLLAPEN (246 aa)) enclose the GB1/RHD3-type G domain. GDP is bound by residues Arg-86, Lys-87, Gly-88, Lys-89, Ser-90, Phe-91, Gln-157, Arg-226, and Asp-227. GTP is bound by residues Arg-86, Lys-87, Gly-88, Lys-89, Ser-90, and Phe-91. Mg(2+) is bound at residue Ser-90. 2 residues coordinate GTP: Arg-226 and Asp-227. Residues 238–266 (LEGGKQFLEKRLQVKKNQHEELQNVRKHI) adopt a coiled-coil conformation. The residue at position 252 (Lys-252) is an N6-methyllysine. Residues Val-285 and Asn-288 each contribute to the GDP site. Val-285 provides a ligand contact to GTP. Residues 356-447 (MLQATAEANN…YANFIKHNDG (92 aa)) are 3HB (three-helix bundle) domain. The segment at 448 to 456 (KNIFYAART) is linker. A helical membrane pass occupies residues 459-479 (TLFAVMFAMYIISGLTGFIGL). At 480 to 481 (NS) the chain is on the lumenal side. The chain crosses the membrane as a helical span at residues 482-502 (IAVLCNLVMGLALTFLCTWAY). The Cytoplasmic portion of the chain corresponds to 503–565 (VKYSGEFREI…VSHHARLKTD (63 aa)). Residues 529-565 (KPLGDNLMEENIRQSVTNSIKAGLTDQVSHHARLKTD) form an autoinhibitory domain region.

This sequence belongs to the TRAFAC class dynamin-like GTPase superfamily. GB1/RHD3 GTPase family. GB1 subfamily. In terms of assembly, monomeric and homodimeric. The homodimer, transiently formed by two molecules on opposing membranes, is the active form mediating ER membrane fusion. Interacts with REEP5 and RTN3; these proteins are involved in endoplasmic reticulum tubular network organization. Interacts with ZFYVE27; both proteins are involved in endoplasmic reticulum tubular network organization.

The protein resides in the endoplasmic reticulum membrane. It carries out the reaction GTP + H2O = GDP + phosphate + H(+). Atlastin-2 (ATL2) is a membrane-anchored GTPase that mediates the GTP-dependent fusion of endoplasmic reticulum (ER) membranes, maintaining the continuous ER network. It facilitates the formation of three-way junctions where ER tubules intersect. Two atlastin-2 on neighboring ER tubules bind GTP and form loose homodimers through the GB1/RHD3-type G domains and 3HB regions. Upon GTP hydrolysis, the 3HB regions tighten, pulling the membranes together to drive their fusion. After fusion, the homodimer disassembles upon release of inorganic phosphate (Pi). Subsequently, GDP dissociates, resetting the monomers to a conformation ready for a new fusion cycle. This is Atlastin-2 from Macaca fascicularis (Crab-eating macaque).